Reading from the N-terminus, the 299-residue chain is MKPVILSGPVLKERTTLRLGGQALAEVRLDDMHAFDGLPRVLERLGGTPAVLGRGSNILARDGELPLVIINPALKAEPEAWADPQAEDRVLVRVAAGVRLPVLLGRLAAQGLSGLEGLAGVPGTVGGAVAMNAGSYGNDMGSVLSSVEIFSAGTGMICVPRSQCRCEYRHFSVPAAGGWFVVAAVTLQLRRSTATAVRDAMRSNALLKKKTQPVTEHSAGCVFKNPADGISAGRLLDQCGFRGRGKGGMAFSSLHANFLVNKAQGTSDDAMDLINDARHAVERATGHYLELEVKIWPWQ.

The FAD-binding PCMH-type domain maps to 19–192; it reads LGGQALAEVR…AAVTLQLRRS (174 aa). The active site involves arginine 169. Cysteine 221 functions as the Proton donor in the catalytic mechanism. Glutamate 292 is a catalytic residue.

Belongs to the MurB family. The cofactor is FAD.

The protein resides in the cytoplasm. It catalyses the reaction UDP-N-acetyl-alpha-D-muramate + NADP(+) = UDP-N-acetyl-3-O-(1-carboxyvinyl)-alpha-D-glucosamine + NADPH + H(+). It participates in cell wall biogenesis; peptidoglycan biosynthesis. Functionally, cell wall formation. The polypeptide is UDP-N-acetylenolpyruvoylglucosamine reductase (Oleidesulfovibrio alaskensis (strain ATCC BAA-1058 / DSM 17464 / G20) (Desulfovibrio alaskensis)).